Consider the following 36-residue polypeptide: Photosystem I reaction center subunit VIII (36 aa).

A helical transmembrane segment spans residues 8–28; sequence SIFVPLVGLVFPAIAMASLFL.

The protein belongs to the PsaI family.

The protein resides in the plastid. The protein localises to the chloroplast thylakoid membrane. In terms of biological role, may help in the organization of the PsaL subunit. The chain is Photosystem I reaction center subunit VIII from Solanum bulbocastanum (Wild potato).